The chain runs to 90 residues: Acylphosphatase (90 aa).

One can recognise an Acylphosphatase-like domain in the interval 3 to 90 (KKQFVVYGIV…HSFGLFSVEH (88 aa)). Residues Arg18 and Asn36 contribute to the active site.

Belongs to the acylphosphatase family.

The catalysed reaction is an acyl phosphate + H2O = a carboxylate + phosphate + H(+). This is Acylphosphatase (acyP) from Mannheimia succiniciproducens (strain KCTC 0769BP / MBEL55E).